The following is a 247-amino-acid chain: AGEDHGRGPYVQADLAYAYEHITRDYPDAAGANKGKISTVSDYFRNIRTHSIHPRVSVGYDFGGWRIAADYARYRKWHNNKYSVNIKELERKNNKTSGGDQLNIKYQKTEHQENGTFHAVSSLGLSTVYDFRVNDKFKPYIGVRVGYGHVRHGIDSTKKTKNTLTAYHGAGTKPTYYDDIDSGKNQKNTYRQNRSSRRLGFGAMAGVGIDVAPGLTLDAGYRYHYWGRLENTRFKTHEASLGVRYRF.

Residue A1 is a signal peptide.

It belongs to the opacity porin family.

It localises to the cell outer membrane. In terms of biological role, implicated in a number of adherence functions. OPA proteins are implicated in pathogenesis and are subject to phase variation. This Neisseria gonorrhoeae protein is Opacity protein opA52 (opaG).